Consider the following 25-residue polypeptide: Tubulin alpha chain (25 aa).

Position 11 (glutamine 11) interacts with GTP.

The protein belongs to the tubulin family. Dimer of alpha and beta chains. A typical microtubule is a hollow water-filled tube with an outer diameter of 25 nm and an inner diameter of 15 nM. Alpha-beta heterodimers associate head-to-tail to form protofilaments running lengthwise along the microtubule wall with the beta-tubulin subunit facing the microtubule plus end conferring a structural polarity. Microtubules usually have 13 protofilaments but different protofilament numbers can be found in some organisms and specialized cells. Mg(2+) is required as a cofactor.

Its subcellular location is the cytoplasm. The protein localises to the cytoskeleton. The catalysed reaction is GTP + H2O = GDP + phosphate + H(+). In terms of biological role, tubulin is the major constituent of microtubules, a cylinder consisting of laterally associated linear protofilaments composed of alpha- and beta-tubulin heterodimers. Microtubules grow by the addition of GTP-tubulin dimers to the microtubule end, where a stabilizing cap forms. Below the cap, tubulin dimers are in GDP-bound state, owing to GTPase activity of alpha-tubulin. The sequence is that of Tubulin alpha chain from Leptomonas seymouri.